Consider the following 282-residue polypeptide: Endonuclease V (282 aa).

Mg(2+)-binding residues include aspartate 52 and aspartate 126. The segment at 250-282 is disordered; the sequence is SLGLPGPPTPRSPKAQRPVACPKGDSGESSALC.

Belongs to the endonuclease V family. Monomer. Interacts with PABPC1; the interaction is RNA-dependent and stimulates ENDOV activity. Requires Mg(2+) as cofactor.

The protein localises to the cytoplasm. It is found in the nucleus. The protein resides in the nucleolus. It localises to the stress granule. Its activity is regulated as follows. Inhibited by normal intracellular concentrations of ATP. In terms of biological role, endoribonuclease that specifically cleaves inosine-containing RNAs: cleaves RNA at the second phosphodiester bond 3' to inosine. Active against both single-stranded and double-stranded RNAs. Has strong preference for single-stranded RNAs (ssRNAs) toward double-stranded RNAs (dsRNAs). Cleaves mRNAs and tRNAs containing inosine. Also able to cleave structure-specific dsRNA substrates containing the specific sites 5'-IIUI-3' and 5'-UIUU-3'. Inosine is present in a number of RNAs following editing; the function of inosine-specific endoribonuclease is still unclear: it could either play a regulatory role in edited RNAs, or be involved in antiviral response by removing the hyperedited long viral dsRNA genome that has undergone A-to-I editing. Binds branched DNA structures. Endoribonuclease that specifically cleaves inosine-containing RNAs: cleaves RNA at the second phosphodiester bond 3' to inosine. Active against both single-stranded and double-stranded RNAs. Cleaves tRNAs containing inosine. The chain is Endonuclease V (ENDOV) from Homo sapiens (Human).